Consider the following 571-residue polypeptide: DDB1- and CUL4-associated factor 11 homolog (571 aa).

Residues 51-75 (RMKPNHSNDSDTDFSSDDEGCPKMT) are disordered. Acidic residues predominate over residues 60–69 (SDTDFSSDDE). WD repeat units follow at residues 162–201 (RVAT…SKYR), 266–305 (RDHC…RIRT), 309–349 (AHED…DGDV), 357–396 (GHRD…NMSG), 435–479 (GHSV…VSRR), and 482–521 (GHTA…EGVI).

This sequence belongs to the WD repeat LEC14B family.

In terms of biological role, involved in regulation of lifespan. Required for dopaminergic CEP neuron degeneration in response to Mn(2+). Inhibits the skn-1-mediated up-regulation of tatn-1. This is DDB1- and CUL4-associated factor 11 homolog from Caenorhabditis elegans.